A 141-amino-acid chain; its full sequence is Hemoglobin subunit alpha (141 aa).

Residues 1 to 141 (VLSDKDKTNV…VSTVLTSKYR (141 aa)) enclose the Globin domain. Position 3 is a phosphoserine (Ser3). At Lys7 the chain carries N6-succinyllysine. Thr8 is modified (phosphothreonine). Lys11 bears the N6-succinyllysine mark. Residue Lys16 is modified to N6-acetyllysine; alternate. Lys16 is modified (N6-succinyllysine; alternate). Tyr24 is subject to Phosphotyrosine. Ser35 is modified (phosphoserine). Lys40 carries the post-translational modification N6-succinyllysine. Position 49 is a phosphoserine (Ser49). Residue His58 coordinates O2. Heme b is bound at residue His87. Residue Ser102 is modified to Phosphoserine. A Phosphothreonine modification is found at Thr108. Ser124 carries the post-translational modification Phosphoserine. Phosphothreonine is present on residues Thr134 and Thr137. A Phosphoserine modification is found at Ser138.

It belongs to the globin family. As to quaternary structure, heterotetramer of two alpha chains and two beta chains. As to expression, red blood cells.

Functionally, involved in oxygen transport from the lung to the various peripheral tissues. In terms of biological role, hemopressin acts as an antagonist peptide of the cannabinoid receptor CNR1. Hemopressin-binding efficiently blocks cannabinoid receptor CNR1 and subsequent signaling. This Elephas maximus (Indian elephant) protein is Hemoglobin subunit alpha (HBA).